The chain runs to 97 residues: Probable gamma-secretase subunit PEN-2 (97 aa).

Over 1 to 20 (MLIPEDDKLDDEKMINIAKK) the chain is Cytoplasmic. The segment at residues 21–39 (LWFIGFFFLPWVWLINILY) is an intramembrane region (helical). Over 40 to 55 (FIPYRNSLNDKVKWYL) the chain is Cytoplasmic. Residues 56-76 (KFSLIGFLGYSTIFMGWMGIY) form a helical membrane-spanning segment. Residues 77 to 97 (LVNRNKWGAFGDDISITIPFG) lie on the Lumenal side of the membrane.

It belongs to the PEN-2 family. As to quaternary structure, the functional gamma-secretase complex is composed of at least four polypeptides: a presenilin homodimer, nicastrin, aph1 and psenen.

The protein resides in the endoplasmic reticulum membrane. It is found in the golgi apparatus. Its subcellular location is the golgi stack membrane. It localises to the cell membrane. The protein localises to the membrane. Essential subunit of the gamma-secretase complex, an endoprotease complex that catalyzes the intramembrane cleavage of integral membrane proteins such as Notch receptors. The gamma-secretase complex plays a role in Notch and Wnt signaling cascades and regulation of downstream processes via its role in processing key regulatory proteins. The polypeptide is Probable gamma-secretase subunit PEN-2 (psenen) (Dictyostelium discoideum (Social amoeba)).